Reading from the N-terminus, the 290-residue chain is Probable proteasome subunit beta type-6 (290 aa).

The protein belongs to the peptidase T1B family. In terms of assembly, the 26S proteasome consists of a 20S proteasome core and two 19S regulatory subunits. The 20S proteasome core is composed of 28 subunits that are arranged in four stacked rings, resulting in a barrel-shaped structure. The two end rings are each formed by seven alpha subunits, and the two central rings are each formed by seven beta subunits. The catalytic chamber with the active sites is on the inside of the barrel.

The protein localises to the cytoplasm. It localises to the nucleus. Non-catalytic component of the proteasome which degrades poly-ubiquitinated proteins in the cytoplasm and in the nucleus. It is essential for the regulated turnover of proteins and for the removal of misfolded proteins. The proteasome is a multicatalytic proteinase complex that is characterized by its ability to cleave peptides with Arg, Phe, Tyr, Leu, and Glu adjacent to the leaving group at neutral or slightly basic pH. It has an ATP-dependent proteolytic activity. The polypeptide is Probable proteasome subunit beta type-6 (PRE7) (Encephalitozoon cuniculi (strain GB-M1) (Microsporidian parasite)).